Here is a 334-residue protein sequence, read N- to C-terminus: Phenazine-1-carboxylate N-methyltransferase (334 aa).

Residues D198 and R241 each coordinate S-adenosyl-L-methionine.

It belongs to the class I-like SAM-binding methyltransferase superfamily. Cation-independent O-methyltransferase family. In terms of assembly, homodimer in solution. Probably interacts transiently with PhzS.

The catalysed reaction is phenazine-1-carboxylate + S-adenosyl-L-methionine = 5-methyl-phenazine-1-carboxylate + S-adenosyl-L-homocysteine. Its pathway is secondary metabolite biosynthesis; pyocyanine biosynthesis. Its activity is regulated as follows. In vitro, requires PhzS for activity. Involved in the biosynthesis of pyocyanine, a blue-pigmented phenazine derivative, which plays a role in virulence. Converts phenazine-1-carboxylate (PCA) to 5-methylphenazine-1-carboxylate (5-methyl-PCA). The chain is Phenazine-1-carboxylate N-methyltransferase from Pseudomonas aeruginosa (strain ATCC 15692 / DSM 22644 / CIP 104116 / JCM 14847 / LMG 12228 / 1C / PRS 101 / PAO1).